A 169-amino-acid polypeptide reads, in one-letter code: Der GTPase-activating protein YihI (169 aa).

Disordered stretches follow at residues 1 to 100 and 144 to 169; these read MKPS…AELE and GLSY…LRGN. The span at 10 to 19 shows a compositional bias: basic residues; sequence SKGHAKARRK. The span at 20–30 shows a compositional bias: basic and acidic residues; that stretch reads TREELDQEARD. Basic residues predominate over residues 31-40; it reads RKRQKKRRGH. Polar residues predominate over residues 49–58; sequence GNTTSGSKGQ. Residues 147 to 159 are compositionally biased toward acidic residues; the sequence is YDDDEEEEEDEKQ. A compositionally biased stretch (basic and acidic residues) spans 160 to 169; sequence EDMMRLLRGN.

Belongs to the YihI family. Interacts with Der.

Its function is as follows. A GTPase-activating protein (GAP) that modifies Der/EngA GTPase function. May play a role in ribosome biogenesis. In Escherichia coli O6:H1 (strain CFT073 / ATCC 700928 / UPEC), this protein is Der GTPase-activating protein YihI.